Here is a 65-residue protein sequence, read N- to C-terminus: Large ribosomal subunit protein bL35 (65 aa).

A disordered region spans residues 1 to 20; that stretch reads MPKMKTNSGSKKRFTLTGTG.

The protein belongs to the bacterial ribosomal protein bL35 family.

This is Large ribosomal subunit protein bL35 from Bacteroides thetaiotaomicron (strain ATCC 29148 / DSM 2079 / JCM 5827 / CCUG 10774 / NCTC 10582 / VPI-5482 / E50).